We begin with the raw amino-acid sequence, 502 residues long: MGKVLVMLTAAAAVVACSVATVMVRRRMKGRRKWRRVVGLLKDLEEACETPLGRLRQMVDAIAVEMQAGLVSEGGSKLKMLLTFVDDLPNGSETGTYYALHLGGSYFRIIKVHLGGQRSSLEVQDVERHSIPTSLMNSTSEVLFDFLASSLQRFIEKEGNDFSLSQPLKRELAFTFSFPVKQTSISSGVLIKWTKGFAISEMAGEDIAECLQGALNKRGLDIRVAALVNDTVGALSFGHFHDPDTIAAVVFGTGSNACYLERTDAIIKCQNPRTTSGSMVVNMEWGNFWSSRLPRTSYDLELDAESMNSNDMGFEKMIGGMYLGDIVRRVILRMSQESDIFGPISSILSTPFVLRTNSVSAMHEDDTSELQEVARILKDLGVSEVPMKVRKLVVKICDVVTRRAARLAAAGIAGILKKVGRDGSGGGRRSDKQIMRRTVVAVEGGLYLNYRMFREYMDEALRDILGEDVAQHVVVKAMEDGSSIGSALLLASSQSVQTIPSV.

A helical transmembrane segment spans residues 4–24 (VLVMLTAAAAVVACSVATVMV). One can recognise a Hexokinase domain in the interval 35–491 (RRVVGLLKDL…SSIGSALLLA (457 aa)). A hexokinase small subdomain region spans residues 90 to 228 (NGSETGTYYA…GLDIRVAALV (139 aa)). ADP is bound by residues glycine 104 and serine 105. Residues threonine 194, lysine 195, asparagine 229, and aspartate 230 each coordinate D-glucose. Positions 229–480 (NDTVGALSFG…QHVVVKAMED (252 aa)) are hexokinase large subdomain. ADP is bound at residue threonine 253. D-glucose is bound by residues asparagine 256, glutamate 284, and glutamate 315. Glycine 445 serves as a coordination point for ADP.

It belongs to the hexokinase family.

Its subcellular location is the mitochondrion outer membrane. The enzyme catalyses a D-hexose + ATP = a D-hexose 6-phosphate + ADP + H(+). It catalyses the reaction D-fructose + ATP = D-fructose 6-phosphate + ADP + H(+). It carries out the reaction D-glucose + ATP = D-glucose 6-phosphate + ADP + H(+). It functions in the pathway carbohydrate metabolism; hexose metabolism. Its pathway is carbohydrate degradation; glycolysis; D-glyceraldehyde 3-phosphate and glycerone phosphate from D-glucose: step 1/4. In terms of biological role, fructose and glucose phosphorylating enzyme. May be involved in the phosphorylation of glucose during the export from mitochondrion to cytosol. The sequence is that of Hexokinase-4 from Arabidopsis thaliana (Mouse-ear cress).